The sequence spans 745 residues: AMP deaminase 1 (745 aa).

Thr-79 carries the post-translational modification Phosphothreonine. A Phosphoserine modification is found at Ser-83. Position 214 is a phosphotyrosine (Tyr-214). Zn(2+) contacts are provided by His-301 and His-303. Substrate contacts are provided by residues His-303 and 372-377; that span reads KFNDKY. A Phosphoserine modification is found at Ser-439. His-570 contacts Zn(2+). Glu-573 is a substrate binding site. The Proton acceptor role is filled by His-592. Asp-647 is a binding site for Zn(2+). 648 to 651 is a substrate binding site; it reads DPMQ.

The protein belongs to the metallo-dependent hydrolases superfamily. Adenosine and AMP deaminases family. Homotetramer. Zn(2+) serves as cofactor.

The enzyme catalyses AMP + H2O + H(+) = IMP + NH4(+). It participates in purine metabolism; IMP biosynthesis via salvage pathway; IMP from AMP: step 1/1. AMP deaminase plays a critical role in energy metabolism. This Mus musculus (Mouse) protein is AMP deaminase 1.